The following is a 256-amino-acid chain: Imidazole glycerol phosphate synthase subunit HisF (256 aa).

Catalysis depends on residues Asp12 and Asp131.

This sequence belongs to the HisA/HisF family. Heterodimer of HisH and HisF.

It localises to the cytoplasm. The catalysed reaction is 5-[(5-phospho-1-deoxy-D-ribulos-1-ylimino)methylamino]-1-(5-phospho-beta-D-ribosyl)imidazole-4-carboxamide + L-glutamine = D-erythro-1-(imidazol-4-yl)glycerol 3-phosphate + 5-amino-1-(5-phospho-beta-D-ribosyl)imidazole-4-carboxamide + L-glutamate + H(+). The protein operates within amino-acid biosynthesis; L-histidine biosynthesis; L-histidine from 5-phospho-alpha-D-ribose 1-diphosphate: step 5/9. Its function is as follows. IGPS catalyzes the conversion of PRFAR and glutamine to IGP, AICAR and glutamate. The HisF subunit catalyzes the cyclization activity that produces IGP and AICAR from PRFAR using the ammonia provided by the HisH subunit. This is Imidazole glycerol phosphate synthase subunit HisF from Ectopseudomonas mendocina (strain ymp) (Pseudomonas mendocina).